A 327-amino-acid polypeptide reads, in one-letter code: Microtubule-associated protein RP/EB family member 2 (327 aa).

The disordered stretch occupies residues 1–21 (MPGPTQTLSPNGENNNDIIQD). Pro-2 carries the N-acetylalanine modification. Ser-9 is modified (phosphoserine). The 103-residue stretch at 57 to 159 (TMSRHDIIAW…FIQWFKKFYD (103 aa)) folds into the Calponin-homology (CH) domain. Tyr-167 bears the Phosphotyrosine mark. 2 disordered regions span residues 171-240 (EARQ…DKDL) and 299-327 (ASEE…QEEY). Residues 187-327 (QIFNLPKKSH…EQQPPQQEEY (141 aa)) form a DCTN1-binding region. Low complexity predominate over residues 200–234 (SPTAGAAKSSPAAKPGSTPSRPSSAKRASSSGSAS). Phosphoserine occurs at positions 219 and 236. One can recognise an EB1 C-terminal domain in the interval 236 to 306 (SDKDLETQVI…LYASEEHEGH (71 aa)). Positions 259-302 (EGVEKERDFYFGKLREIELLCQEHGQENDDLVQRLMDILYASEE) are APC-binding. Residues 300-317 (SEEHEGHTEEPEAEEQAH) show a composition bias toward basic and acidic residues. Over residues 318 to 327 (EQQPPQQEEY) the composition is skewed to low complexity.

The protein belongs to the MAPRE family. Interacts with DCTN1. Interacts with APC (via C-terminal). Interacts with monomeric and polymerized tubulin. Interacts with SLAIN1. Interacts (via the N-terminal region) with BAG1. Interacts with ASB14. Interacts with HAX1; this interaction is essential for epidermal cell migration. Post-translationally, phosphorylated at Ser-236 by CK2 leading to enhanced cell adhesion. Phosphorylated by CDK1 and AURKB during mitosis reduces the binding affinity of MAPRE2 for microtubules. Ubiquitinated in an ASB14-dependent manner; leading to proteasomal degradation. As to expression, expressed in different tumor cell lines. Up-regulated in activated B- and T-lymphocytes.

The protein localises to the cytoplasm. It is found in the cytoskeleton. Its function is as follows. Adapter protein that is involved in microtubule polymerization, and spindle function by stabilizing microtubules and anchoring them at centrosomes. Therefore, ensures mitotic progression and genome stability. Acts as a central regulator of microtubule reorganization in apico-basal epithelial differentiation. Plays a role during oocyte meiosis by regulating microtubule dynamics. Participates in neurite growth by interacting with plexin B3/PLXNB3 and microtubule reorganization during apico-basal epithelial differentiation. Also plays an essential role for cell migration and focal adhesion dynamics. Mechanistically, recruits HAX1 to microtubules in order to regulate focal adhesion dynamics. The polypeptide is Microtubule-associated protein RP/EB family member 2 (MAPRE2) (Homo sapiens (Human)).